Reading from the N-terminus, the 551-residue chain is Scaffold protein OPG125 (551 aa).

The protein belongs to the orthopoxvirus protein OPG125 family. As to quaternary structure, homotrimer. Self-assembles to form a layer. Interacts with OPG158 (via N-terminus); this interaction is necessary for OPG125 association with membranes.

Its subcellular location is the membrane. Scaffold protein which forms a transitory spherical honeycomb lattice providing curvature and rigidity to the convex membrane of crescent and immature virions (IV). This association occurs concomitantly with viral membrane formation. Targeted by the drug rifampicin, which prevents the formation of this lattice, and hence virus morphogenesis. In the presence of rifampicin, irregularly shaped membranes that lack the honeycomb layer accumulate around areas of electron-dense viroplasm. This layer is lost from virions during maturation from IV to mature virion (MV), through the proteolysis of OPG158 N-terminus. This is Scaffold protein OPG125 (OPG125) from Homo sapiens (Human).